Consider the following 579-residue polypeptide: Laccase (579 aa).

The segment at residues 1–31 is a signal peptide (tat-type signal); that stretch reads MTDWSRRRFLQTGAALGIAGTLPQTTTEVSA. A Plastocyanin-like 1 domain is found at 82–214; sequence WGFDGSYPGP…AGLLGLYSIT (133 aa). 4 residues coordinate Cu cation: histidine 145, histidine 147, histidine 192, and histidine 194. Residues 372-401 are disordered; sequence VSDPSTPPEDASADPTSLSLPTPASYDESD. One can recognise a Plastocyanin-like 2 domain in the interval 423–530; the sequence is LNGHVFGDED…NKMMIPFVVE (108 aa). An N-linked (GlcNAc...) asparagine glycan is attached at asparagine 449. Cu cation-binding residues include histidine 455, histidine 458, histidine 460, histidine 512, cysteine 513, histidine 514, histidine 518, and methionine 523. Asparagine 557 is a glycosylation site (N-linked (GlcNAc...) asparagine).

This sequence belongs to the multicopper oxidase family. Cu(2+) serves as cofactor. Exported by the Tat system. Post-translationally, glycosylated.

The protein localises to the secreted. The catalysed reaction is 4 hydroquinone + O2 = 4 benzosemiquinone + 2 H2O. Its activity is regulated as follows. Inhibited by 1 mM NaN(3), 10 mM thiourea, 10 mM 1,10-phenanthroline, 0.1 mM DL-dithiothreitol (DTT) and 1 mM L-cysteine. The inhibition by DTT and L-cysteine is likely caused by reduction of the oxidized substrate and not by inhibition of the enzyme. In terms of biological role, catalyzes the oxidation of a wide variety of organic substrates, including bilirubin, syringaldazine (SGZ), 2,2'-azino-di-(3-ethylbenzothiazoline)-6-sulfonic acid (ABTS) and dimethoxyphenol (DMP). No oxidation of Fe(2+) or guaiacol. The polypeptide is Laccase (lccA) (Haloferax volcanii (strain ATCC 29605 / DSM 3757 / JCM 8879 / NBRC 14742 / NCIMB 2012 / VKM B-1768 / DS2) (Halobacterium volcanii)).